The following is a 154-amino-acid chain: Acidic phospholipase A2 1 (154 aa).

Residues 1–19 form the signal peptide; the sequence is MHPAHLLVLLGVCVSLLGA. The propeptide occupies 20–27; the sequence is ARIPPLPL. Disulfide bonds link cysteine 38/cysteine 104, cysteine 54/cysteine 153, cysteine 56/cysteine 72, cysteine 71/cysteine 132, cysteine 78/cysteine 125, cysteine 88/cysteine 118, and cysteine 111/cysteine 123. Residues phenylalanine 55, glycine 57, and glycine 59 each contribute to the Ca(2+) site. Residue histidine 75 is part of the active site. Aspartate 76 contributes to the Ca(2+) binding site. Aspartate 126 is an active-site residue.

It belongs to the phospholipase A2 family. Group I subfamily. D49 sub-subfamily. Monomer. Requires Ca(2+) as cofactor. Expressed by the venom gland.

It is found in the secreted. It catalyses the reaction a 1,2-diacyl-sn-glycero-3-phosphocholine + H2O = a 1-acyl-sn-glycero-3-phosphocholine + a fatty acid + H(+). Its function is as follows. Snake venom phospholipase A2 (PLA2) that shows moderate enzymatic activity and exhibits procoagulant activity. PLA2 catalyzes the calcium-dependent hydrolysis of the 2-acyl groups in 3-sn-phosphoglycerides. The polypeptide is Acidic phospholipase A2 1 (Pseudonaja textilis (Eastern brown snake)).